A 610-amino-acid polypeptide reads, in one-letter code: DNA mismatch repair protein MutL (610 aa).

The protein belongs to the DNA mismatch repair MutL/HexB family.

Functionally, this protein is involved in the repair of mismatches in DNA. It is required for dam-dependent methyl-directed DNA mismatch repair. May act as a 'molecular matchmaker', a protein that promotes the formation of a stable complex between two or more DNA-binding proteins in an ATP-dependent manner without itself being part of a final effector complex. The polypeptide is DNA mismatch repair protein MutL (Rickettsia rickettsii (strain Iowa)).